Reading from the N-terminus, the 437-residue chain is Transcriptional modulator WTM1 (437 aa).

The WD 1 repeat unit spans residues 103-144 (YQGETVSKMAYLDKTGETTLLSMSKNGSLAWFKEGIKVPIHI). Residue T187 is modified to Phosphothreonine. S200 carries the phosphoserine modification. 3 WD repeats span residues 221-259 (PGTT…KPIW), 264-304 (PKNG…AATT), and 326-366 (AGGD…SKYN). Residues 368-404 (DDTIAPPQDATEESQTKSLRFLHKGGSRRSPKQIGRR) are disordered. T370 carries the post-translational modification Phosphothreonine. Positions 387–402 (RFLHKGGSRRSPKQIG) are enriched in basic residues. T406 bears the Phosphothreonine mark.

Interacts with KAP122.

Its subcellular location is the cytoplasm. It localises to the nucleus. Transcriptional modulator with roles in meiotic regulation and silencing. Acts either as an adapter to facilitate nuclear import by KAP122 of the RNR2-RNR4 heterodimer, also called beta-beta' subunit, which corresponds to the small subunit of the ribonucleotide reductase (RNR); or as an anchor to retain RNR2-RNR4 in the nucleus. The chain is Transcriptional modulator WTM1 (WTM1) from Saccharomyces cerevisiae (strain ATCC 204508 / S288c) (Baker's yeast).